We begin with the raw amino-acid sequence, 96 residues long: MSRPAKIGATAALSQLQGWAVVSEKDAIGKTYLFADFNAAFGFMTRVALMADKLDHHPEWFNVYNRVEVVLTTHDADGVSDLDVTMARFMDGIATA.

This sequence belongs to the pterin-4-alpha-carbinolamine dehydratase family.

It catalyses the reaction (4aS,6R)-4a-hydroxy-L-erythro-5,6,7,8-tetrahydrobiopterin = (6R)-L-erythro-6,7-dihydrobiopterin + H2O. This chain is Putative pterin-4-alpha-carbinolamine dehydratase, found in Caulobacter sp. (strain K31).